A 404-amino-acid polypeptide reads, in one-letter code: S-adenosylmethionine synthase (404 aa).

Residue His17 coordinates ATP. Residue Asp19 coordinates Mg(2+). Position 45 (Glu45) interacts with K(+). Glu58 and Gln101 together coordinate L-methionine. Residues 101–111 (QSADINRGVDR) form a flexible loop region. ATP-binding positions include 172–174 (DAK), 245–246 (RF), Asp254, 260–261 (RK), Ala277, and Lys281. Asp254 provides a ligand contact to L-methionine. L-methionine is bound at residue Lys285.

It belongs to the AdoMet synthase family. Homotetramer; dimer of dimers. It depends on Mg(2+) as a cofactor. K(+) serves as cofactor.

The protein resides in the cytoplasm. It catalyses the reaction L-methionine + ATP + H2O = S-adenosyl-L-methionine + phosphate + diphosphate. The protein operates within amino-acid biosynthesis; S-adenosyl-L-methionine biosynthesis; S-adenosyl-L-methionine from L-methionine: step 1/1. Its function is as follows. Catalyzes the formation of S-adenosylmethionine (AdoMet) from methionine and ATP. The overall synthetic reaction is composed of two sequential steps, AdoMet formation and the subsequent tripolyphosphate hydrolysis which occurs prior to release of AdoMet from the enzyme. The polypeptide is S-adenosylmethionine synthase (Chlorobium luteolum (strain DSM 273 / BCRC 81028 / 2530) (Pelodictyon luteolum)).